The sequence spans 1647 residues: Probable ubiquitin fusion degradation protein C12B10.01c (1647 aa).

Over residues 192 to 209 (TYSDSSNYHTSTDSSQYN) the composition is skewed to polar residues. Disordered regions lie at residues 192–288 (TYSD…PSAA) and 1039–1076 (ESMS…SSTS). Acidic residues-rich tracts occupy residues 218–228 (DTNDGTDDDIN) and 245–273 (ERDE…ENEN). Low complexity predominate over residues 1039–1050 (ESMSGSSRNSSG). Residues 1051-1065 (DYTDSMSQDAPNHTT) are compositionally biased toward polar residues. Over residues 1066-1076 (EPSERRDSSTS) the composition is skewed to basic and acidic residues. A K-box region spans residues 1183-1257 (IENILTDFSN…SVSFLLSRNP (75 aa)). The region spanning 1294–1647 (ATYAASENIL…LEGQGSFHLS (354 aa)) is the HECT domain. The Glycyl thioester intermediate role is filled by Cys1614.

Belongs to the UPL family. K-HECT subfamily.

It carries out the reaction S-ubiquitinyl-[E2 ubiquitin-conjugating enzyme]-L-cysteine + [acceptor protein]-L-lysine = [E2 ubiquitin-conjugating enzyme]-L-cysteine + N(6)-ubiquitinyl-[acceptor protein]-L-lysine.. Its function is as follows. E3 ubiquitin-protein ligase which accepts ubiquitin from an E2 ubiquitin-conjugating enzyme in the form of a thioester and then directly transfers the ubiquitin to targeted substrates. This chain is Probable ubiquitin fusion degradation protein C12B10.01c, found in Schizosaccharomyces pombe (strain 972 / ATCC 24843) (Fission yeast).